A 194-amino-acid chain; its full sequence is UPF0301 protein BQ03640 (194 aa).

This sequence belongs to the UPF0301 (AlgH) family.

In Bartonella quintana (strain Toulouse) (Rochalimaea quintana), this protein is UPF0301 protein BQ03640.